The sequence spans 1071 residues: DNA-directed RNA polymerase subunit beta (1071 aa).

The protein belongs to the RNA polymerase beta chain family. In terms of assembly, in plastids the minimal PEP RNA polymerase catalytic core is composed of four subunits: alpha, beta, beta', and beta''. When a (nuclear-encoded) sigma factor is associated with the core the holoenzyme is formed, which can initiate transcription.

The protein resides in the plastid. It is found in the chloroplast. It carries out the reaction RNA(n) + a ribonucleoside 5'-triphosphate = RNA(n+1) + diphosphate. DNA-dependent RNA polymerase catalyzes the transcription of DNA into RNA using the four ribonucleoside triphosphates as substrates. The sequence is that of DNA-directed RNA polymerase subunit beta from Panax ginseng (Korean ginseng).